The sequence spans 270 residues: Diaminopimelate epimerase (270 aa).

Positions 15, 49, and 66 each coordinate substrate. The Proton donor role is filled by Cys75. Substrate contacts are provided by residues 76 to 77, Asn155, Asn187, and 204 to 205; these read GN and ER. Cys213 functions as the Proton acceptor in the catalytic mechanism. 214 to 215 contacts substrate; the sequence is GS.

Belongs to the diaminopimelate epimerase family. Homodimer.

It is found in the cytoplasm. It catalyses the reaction (2S,6S)-2,6-diaminopimelate = meso-2,6-diaminopimelate. Its pathway is amino-acid biosynthesis; L-lysine biosynthesis via DAP pathway; DL-2,6-diaminopimelate from LL-2,6-diaminopimelate: step 1/1. In terms of biological role, catalyzes the stereoinversion of LL-2,6-diaminopimelate (L,L-DAP) to meso-diaminopimelate (meso-DAP), a precursor of L-lysine and an essential component of the bacterial peptidoglycan. This is Diaminopimelate epimerase from Rickettsia typhi (strain ATCC VR-144 / Wilmington).